Here is a 256-residue protein sequence, read N- to C-terminus: 4-oxalocrotonate decarboxylase (256 aa).

This sequence belongs to the hydratase/decarboxylase family. Forms a complex with AmnF. The cofactor is Mg(2+). Mn(2+) serves as cofactor.

The catalysed reaction is (3E)-2-oxohex-3-enedioate + H(+) = 2-oxopent-4-enoate + CO2. Its activity is regulated as follows. Strongly inhibited by Fe(2+), Fe(3+), K(3)[Fe(CN)(6)], Ag(+) and Cu(2+). Functionally, involved in the modified meta-cleavage pathway for the 2-aminophenol catabolism. In Pseudomonas sp, this protein is 4-oxalocrotonate decarboxylase (amnE).